A 100-amino-acid polypeptide reads, in one-letter code: Urease subunit gamma (100 aa).

It belongs to the urease gamma subunit family. Heterotrimer of UreA (gamma), UreB (beta) and UreC (alpha) subunits. Three heterotrimers associate to form the active enzyme.

It localises to the cytoplasm. The catalysed reaction is urea + 2 H2O + H(+) = hydrogencarbonate + 2 NH4(+). The protein operates within nitrogen metabolism; urea degradation; CO(2) and NH(3) from urea (urease route): step 1/1. This Nostoc sp. (strain PCC 7120 / SAG 25.82 / UTEX 2576) protein is Urease subunit gamma.